A 279-amino-acid chain; its full sequence is HTH-type transcriptional regulator HdfR (279 aa).

Residues 1–58 form the HTH lysR-type domain; sequence MDTELLKTFLEVSRTRHFGRAAESLYLTQSAVSFRIRQLENQLGVNLFTRHRNNIRLT. Residues 18–37 constitute a DNA-binding region (H-T-H motif); it reads FGRAAESLYLTQSAVSFRIR.

The protein belongs to the LysR transcriptional regulatory family.

Negatively regulates the transcription of the flagellar master operon flhDC by binding to the upstream region of the operon. The chain is HTH-type transcriptional regulator HdfR from Escherichia coli O6:K15:H31 (strain 536 / UPEC).